Here is a 144-residue protein sequence, read N- to C-terminus: Large ribosomal subunit protein uL13 (144 aa).

It belongs to the universal ribosomal protein uL13 family. As to quaternary structure, part of the 50S ribosomal subunit.

Its function is as follows. This protein is one of the early assembly proteins of the 50S ribosomal subunit, although it is not seen to bind rRNA by itself. It is important during the early stages of 50S assembly. This Ruminiclostridium cellulolyticum (strain ATCC 35319 / DSM 5812 / JCM 6584 / H10) (Clostridium cellulolyticum) protein is Large ribosomal subunit protein uL13.